The sequence spans 261 residues: Triosephosphate isomerase (261 aa).

10–12 (NWK) contacts substrate. The active-site Electrophile is His100. The active-site Proton acceptor is the Glu172. Substrate contacts are provided by residues Gly178, Ser218, and 239–240 (GG).

The protein belongs to the triosephosphate isomerase family. In terms of assembly, homodimer.

It localises to the cytoplasm. It carries out the reaction D-glyceraldehyde 3-phosphate = dihydroxyacetone phosphate. It participates in carbohydrate biosynthesis; gluconeogenesis. The protein operates within carbohydrate degradation; glycolysis; D-glyceraldehyde 3-phosphate from glycerone phosphate: step 1/1. Involved in the gluconeogenesis. Catalyzes stereospecifically the conversion of dihydroxyacetone phosphate (DHAP) to D-glyceraldehyde-3-phosphate (G3P). The sequence is that of Triosephosphate isomerase from Mycobacterium avium (strain 104).